Consider the following 155-residue polypeptide: Chaperone protein IpgC (155 aa).

This sequence belongs to the LcrH/SycD chaperone family.

It localises to the cytoplasm. Its function is as follows. Assists the correct folding of nascent IpaB. Once it is bound to IpaB, it binds to IpaC and impedes their premature association that would lead to their degradation in the absence of IpcG. The protein is Chaperone protein IpgC (ipgC) of Shigella dysenteriae.